Here is a 1409-residue protein sequence, read N- to C-terminus: Adhesion and penetration protein autotransporter (1409 aa).

A signal peptide spans 1 to 25 (MKKTVFRLNFLTACVSLGIASQAWA). The Peptidase S6 domain occupies 26 to 294 (GHTYFGIDYQ…LIREEWFYNE (269 aa)). Residue Ser-250 is part of the active site. Disordered regions lie at residues 866-888 (YSAS…TPTS) and 1016-1078 (AKQV…SKRA). The span at 1057–1067 (VEQTTETQTSK) shows a compositional bias: polar residues. Positions 1068-1077 (PKTKKGRSKR) are enriched in basic residues. The Autotransporter domain occupies 1156–1409 (VDQAQSALWT…NVGVKLGYRW (254 aa)).

The protein resides in the periplasm. It is found in the secreted. It localises to the cell surface. Its subcellular location is the cell outer membrane. Functionally, probable protease; promotes adherence and invasion by directly binding to a host cell structure. The protein is Adhesion and penetration protein autotransporter (hap) of Haemophilus influenzae (strain ATCC 51907 / DSM 11121 / KW20 / Rd).